Consider the following 192-residue polypeptide: uncharacterized protein (192 aa).

This is an uncharacterized protein from Aquifex aeolicus (strain VF5).